Consider the following 287-residue polypeptide: uncharacterized protein (287 aa).

The HTH araC/xylS-type domain occupies 183–281 (WEAARYLQEH…GISPIEYRKI (99 aa)). 2 consecutive DNA-binding regions (H-T-H motif) follow at residues 200-221 (KDLSLALHYHQDYVSRCMQQVL) and 248-271 (MGVIAETVGMEDPTYFSKLFKQIE).

This is an uncharacterized protein from Bacillus subtilis (strain 168).